We begin with the raw amino-acid sequence, 430 residues long: MTATLAVIGAGPKAVAVAAKAAELRNMGVDAPDVVVVERAGVGANWTAAGGWTDGQHRLGTSPEKDIGFPYRSSLVPRRNAELDDRMTRHSWQAYLVATSQFAEWIDRGRPAPNHHRWAAYLRWVADAIGMNVVHGEVERISIGGRGWELHTPESTVAADAVMITGPGQAERTLLPGHPRVMSIADFWRRTAGHELIVAERVAMIGGGETAASMLNELFRHRVSTITVISPQVTLFTRGEGFFENTLFSDPTGWTSLTLAERRDAMFRTDRGVFSARVQEALLADDRIRHLRGRVAHAVPRDGRIRLTLHTDRAGERVETVHGFDLVIDGQGADALWFLPLLGQDARDLLELGLGGPLTGELLQESIGHDLAVGGVTPKLFLPGLAGLNQGPGFPNLSCLGLMSDRILGADLGANAAMTNRRSIEHQPIR.

Positions M1–A21 are cleaved as a signal peptide.

Belongs to the lysine N(6)-hydroxylase/L-ornithine N(5)-oxygenase family. The cofactor is FAD.

The catalysed reaction is L-lysine + NADPH + O2 = N(6)-hydroxy-L-lysine + NADP(+) + H2O. It functions in the pathway siderophore biosynthesis; mycobactin biosynthesis. In terms of biological role, flavoprotein monooxygenase required for N-hydroxylation of the two acylated lysine residues during mycobactin assembly, thus producing the hydroxamate groups necessary for iron sequestration. Is also able, but less efficiently, to hydroxylate L-lysine (non acylated) in vitro. In Mycobacterium sp. (strain MCS), this protein is L-lysine N6-monooxygenase MbtG (mbtG).